The primary structure comprises 334 residues: GTPase Obg (334 aa).

Residues 1–159 (MRFVDEVVIK…KEVRLELNLL (159 aa)) enclose the Obg domain. Positions 160-331 (ADVALLGLPN…LAKKLNEFLQ (172 aa)) constitute an OBG-type G domain. Residues 166-173 (GLPNAGKS), 191-195 (FTTMY), 212-215 (DIPG), 282-285 (NKID), and 312-314 (SAA) each bind GTP. 2 residues coordinate Mg(2+): Ser-173 and Thr-193.

Belongs to the TRAFAC class OBG-HflX-like GTPase superfamily. OBG GTPase family. Monomer. Requires Mg(2+) as cofactor.

Its subcellular location is the cytoplasm. An essential GTPase which binds GTP, GDP and possibly (p)ppGpp with moderate affinity, with high nucleotide exchange rates and a fairly low GTP hydrolysis rate. Plays a role in control of the cell cycle, stress response, ribosome biogenesis and in those bacteria that undergo differentiation, in morphogenesis control. This chain is GTPase Obg, found in Francisella tularensis subsp. tularensis (strain WY96-3418).